Reading from the N-terminus, the 141-residue chain is Hemoglobin subunit alpha-3 (141 aa).

Residues 1–141 (VLSPADKTNV…VSTVLTSKYR (141 aa)) form the Globin domain. Residue histidine 58 participates in O2 binding. Residue histidine 87 coordinates heme b.

This sequence belongs to the globin family. In terms of assembly, heterotetramer of two alpha chains and two beta chains. In terms of tissue distribution, red blood cells.

Involved in oxygen transport from the lung to the various peripheral tissues. The sequence is that of Hemoglobin subunit alpha-3 from Pan troglodytes (Chimpanzee).